The following is a 411-amino-acid chain: Putative acid phosphatase 10 (411 aa).

The active-site Nucleophile is His-33. Residue Asp-313 is the Proton donor of the active site. Cys-379 and Cys-385 are oxidised to a cystine.

Belongs to the histidine acid phosphatase family.

The enzyme catalyses a phosphate monoester + H2O = an alcohol + phosphate. The sequence is that of Putative acid phosphatase 10 (pho-10) from Caenorhabditis elegans.